The sequence spans 399 residues: Probable protein phosphatase 2C 28 (399 aa).

Positions 48-356 (EFSMAVVQAN…DDITVIVVFL (309 aa)) constitute a PPM-type phosphatase domain. Positions 87, 88, 288, and 347 each coordinate Mn(2+).

This sequence belongs to the PP2C family. The cofactor is Mg(2+). Mn(2+) serves as cofactor.

It catalyses the reaction O-phospho-L-seryl-[protein] + H2O = L-seryl-[protein] + phosphate. The enzyme catalyses O-phospho-L-threonyl-[protein] + H2O = L-threonyl-[protein] + phosphate. The sequence is that of Probable protein phosphatase 2C 28 from Oryza sativa subsp. japonica (Rice).